The chain runs to 550 residues: Glucose-6-phosphate isomerase (550 aa).

The Proton donor role is filled by Glu356. Residues His387 and Lys515 contribute to the active site.

It belongs to the GPI family.

Its subcellular location is the cytoplasm. The enzyme catalyses alpha-D-glucose 6-phosphate = beta-D-fructose 6-phosphate. Its pathway is carbohydrate biosynthesis; gluconeogenesis. The protein operates within carbohydrate degradation; glycolysis; D-glyceraldehyde 3-phosphate and glycerone phosphate from D-glucose: step 2/4. In terms of biological role, catalyzes the reversible isomerization of glucose-6-phosphate to fructose-6-phosphate. This Vibrio cholerae serotype O1 (strain ATCC 39315 / El Tor Inaba N16961) protein is Glucose-6-phosphate isomerase.